Here is a 109-residue protein sequence, read N- to C-terminus: Large ribosomal subunit protein uL22 (109 aa).

The protein belongs to the universal ribosomal protein uL22 family. Part of the 50S ribosomal subunit.

Functionally, this protein binds specifically to 23S rRNA; its binding is stimulated by other ribosomal proteins, e.g. L4, L17, and L20. It is important during the early stages of 50S assembly. It makes multiple contacts with different domains of the 23S rRNA in the assembled 50S subunit and ribosome. In terms of biological role, the globular domain of the protein is located near the polypeptide exit tunnel on the outside of the subunit, while an extended beta-hairpin is found that lines the wall of the exit tunnel in the center of the 70S ribosome. The sequence is that of Large ribosomal subunit protein uL22 from Thiobacillus denitrificans (strain ATCC 25259 / T1).